Reading from the N-terminus, the 280-residue chain is Proteasome subunit beta (280 aa).

Residues 1 to 53 (MSEYSAGRSGFSPAYLDRVGSSFTDFLAAAAPHLLPGSRPVPQIPVGNVTPHG) constitute a propeptide, removed in mature form; by autocatalysis. Catalysis depends on threonine 54, which acts as the Nucleophile.

It belongs to the peptidase T1B family. In terms of assembly, the 20S proteasome core is composed of 14 alpha and 14 beta subunits that assemble into four stacked heptameric rings, resulting in a barrel-shaped structure. The two inner rings, each composed of seven catalytic beta subunits, are sandwiched by two outer rings, each composed of seven alpha subunits. The catalytic chamber with the active sites is on the inside of the barrel. Has a gated structure, the ends of the cylinder being occluded by the N-termini of the alpha-subunits. Is capped by the proteasome-associated ATPase, ARC.

It localises to the cytoplasm. The catalysed reaction is Cleavage of peptide bonds with very broad specificity.. Its pathway is protein degradation; proteasomal Pup-dependent pathway. The formation of the proteasomal ATPase ARC-20S proteasome complex, likely via the docking of the C-termini of ARC into the intersubunit pockets in the alpha-rings, may trigger opening of the gate for substrate entry. Interconversion between the open-gate and close-gate conformations leads to a dynamic regulation of the 20S proteasome proteolysis activity. Its function is as follows. Component of the proteasome core, a large protease complex with broad specificity involved in protein degradation. In Geodermatophilus obscurus (strain ATCC 25078 / DSM 43160 / JCM 3152 / CCUG 61914 / KCC A-0152 / KCTC 9177 / NBRC 13315 / NRRL B-3577 / G-20), this protein is Proteasome subunit beta.